We begin with the raw amino-acid sequence, 231 residues long: Small ribosomal subunit protein uS5 (231 aa).

A disordered region spans residues 1 to 63 (MADLENKTVK…KSVDRANKVK (63 aa)). The span at 29-60 (KRTESGAKKQIWEKRSAHDSKDMPKKSVDRAN) shows a compositional bias: basic and acidic residues. The S5 DRBM domain occupies 75–138 (FSEKVVNISR…KDARNHLISV (64 aa)).

The protein belongs to the universal ribosomal protein uS5 family. In terms of assembly, part of the 30S ribosomal subunit. Contacts proteins S4 and S8.

In terms of biological role, with S4 and S12 plays an important role in translational accuracy. Its function is as follows. Located at the back of the 30S subunit body where it stabilizes the conformation of the head with respect to the body. The polypeptide is Small ribosomal subunit protein uS5 (Mycoplasmopsis agalactiae (strain NCTC 10123 / CIP 59.7 / PG2) (Mycoplasma agalactiae)).